Here is a 164-residue protein sequence, read N- to C-terminus: Endoribonuclease YbeY (164 aa).

Residues His132, His136, and His142 each coordinate Zn(2+).

The protein belongs to the endoribonuclease YbeY family. It depends on Zn(2+) as a cofactor.

The protein localises to the cytoplasm. Single strand-specific metallo-endoribonuclease involved in late-stage 70S ribosome quality control and in maturation of the 3' terminus of the 16S rRNA. The sequence is that of Endoribonuclease YbeY from Clostridium kluyveri (strain NBRC 12016).